The sequence spans 312 residues: Glycine--tRNA ligase alpha subunit (312 aa).

The protein belongs to the class-II aminoacyl-tRNA synthetase family. In terms of assembly, tetramer of two alpha and two beta subunits.

Its subcellular location is the cytoplasm. The catalysed reaction is tRNA(Gly) + glycine + ATP = glycyl-tRNA(Gly) + AMP + diphosphate. This is Glycine--tRNA ligase alpha subunit from Methylobacillus flagellatus (strain ATCC 51484 / DSM 6875 / VKM B-1610 / KT).